Here is a 391-residue protein sequence, read N- to C-terminus: Processive diacylglycerol beta-glucosyltransferase (391 aa).

It belongs to the glycosyltransferase 28 family. UgtP subfamily.

Its subcellular location is the cell membrane. It catalyses the reaction a 1,2-diacyl-3-O-(beta-D-glucopyranosyl)-sn-glycerol + UDP-alpha-D-glucose = a 1,2-diacyl-3-O-(beta-D-Glc-(1-&gt;6)-beta-D-Glc)-sn-glycerol + UDP + H(+). The catalysed reaction is a 1,2-diacyl-sn-glycerol + UDP-alpha-D-glucose = a 1,2-diacyl-3-O-(beta-D-glucopyranosyl)-sn-glycerol + UDP + H(+). It participates in glycolipid metabolism; diglucosyl-diacylglycerol biosynthesis. Its function is as follows. Processive glucosyltransferase involved in the biosynthesis of both the bilayer- and non-bilayer-forming membrane glucolipids. Is able to successively transfer two glucosyl residues to diacylglycerol (DAG), thereby catalyzing the formation of beta-monoglucosyl-DAG (3-O-(beta-D-glucopyranosyl)-1,2-diacyl-sn-glycerol) and beta-diglucosyl-DAG (3-O-(beta-D-glucopyranosyl-beta-(1-&gt;6)-D-glucopyranosyl)-1,2-diacyl-sn-glycerol). Beta-diglucosyl-DAG is the predominant glycolipid found in Bacillales and is also used as a membrane anchor for lipoteichoic acid (LTA). This chain is Processive diacylglycerol beta-glucosyltransferase, found in Staphylococcus aureus (strain bovine RF122 / ET3-1).